A 961-amino-acid polypeptide reads, in one-letter code: Roundabout homolog 4 (961 aa).

An N-terminal signal peptide occupies residues 1–37; sequence MGQGEELRAAVDSGGMGLLGTKCPLPLLLLFIMGGKA. Ig-like C2-type domains follow at residues 42–142 and 148–235; these read PQIL…ARLS and EDFR…ARVS. Cystine bridges form between C63/C125 and C169/C218. N-linked (GlcNAc...) asparagine glycosylation is found at N211 and N257. Fibronectin type-III domains follow at residues 259-356 and 358-453; these read TLLN…LPEQ and PSAP…LEQA. N-linked (GlcNAc...) asparagine glycans are attached at residues N371, N400, and N407. Positions 544-559 are enriched in low complexity; the sequence is SGSRDLSSSSSLSSRL. Disordered regions lie at residues 544–563 and 600–634; these read SGSR…GVDP and QTSS…SSDS. The span at 623-634 shows a compositional bias: polar residues; sequence TGTSSPWASSDS. 2 N-linked (GlcNAc...) asparagine glycosylation sites follow: N691 and N723. Residues 726-810 are disordered; sequence ELAARPLPPT…SLEEEDQDSV (85 aa). The segment covering 755–769 has biased composition (low complexity); that stretch reads LQAPSSDPLPAAPLS. The segment covering 770-783 has biased composition (polar residues); the sequence is VLNSSRPSSPQASF. N-linked (GlcNAc...) asparagine glycans are attached at residues N772 and N793. A compositionally biased stretch (low complexity) spans 784-801; the sequence is LSVPSPGSSNLSSSSLSS. Residue S823 is modified to Phosphoserine.

Belongs to the immunoglobulin superfamily. ROBO family. Interacts with SLIT2 and ENAH.

In terms of biological role, receptor for Slit proteins, at least for SLIT2, and seems to be involved in angiogenesis and vascular patterning. May mediate the inhibition of primary endothelial cell migration by Slit proteins. Involved in the maintenance of endothelial barrier organization and function. The protein is Roundabout homolog 4 (Robo4) of Rattus norvegicus (Rat).